Consider the following 799-residue polypeptide: Signal transducer and activator of transcription 5A (799 aa).

Y90 is modified (phosphotyrosine). Residue S128 is modified to Phosphoserine. Positions 589-686 constitute an SH2 domain; it reads WNDGAILGFV…EVFSKYYTPV (98 aa). Y682 carries the phosphotyrosine modification. Y699 bears the Phosphotyrosine; by JAK2 mark. The segment at 778–799 is disordered; sequence DSLDPRLSPPAGLFASTRGSLS. The residue at position 785 (S785) is a Phosphoserine.

Belongs to the transcription factor STAT family. Forms a homodimer or a heterodimer with a related family member. Binds NR3C1. Interacts with NCOA1 and SOCS7. Interacts with ERBB4. Interacts with EBF4. Interacts with CD69. ISGylated. Post-translationally, tyrosine phosphorylated in response to KITLG/SCF, IL2, IL3, IL7, IL15, CSF2/GMCSF, GH1, PRL, EPO and THPO. Activated KIT promotes phosphorylation on tyrosine residues and subsequent translocation to the nucleus. Tyrosine phosphorylated in response to constitutively activated FGFR1, FGFR2, FGFR3 and FGFR4. Tyrosine phosphorylation is required for DNA-binding activity and dimerization. Serine phosphorylation is also required for maximal transcriptional activity. Tyrosine phosphorylated in response to signaling via activated FLT3; wild-type FLT3 results in much weaker phosphorylation than constitutively activated mutant FLT3. Alternatively, can be phosphorylated by JAK2 at Tyr-699.

Its subcellular location is the cytoplasm. It is found in the nucleus. Carries out a dual function: signal transduction and activation of transcription. Mediates cellular responses to the cytokine KITLG/SCF and other growth factors. May mediate cellular responses to activated FGFR1, FGFR2, FGFR3 and FGFR4. Binds to the GAS element and activates PRL-induced transcription. Regulates the expression of milk proteins during lactation. The polypeptide is Signal transducer and activator of transcription 5A (STAT5A) (Sus scrofa (Pig)).